The sequence spans 290 residues: 3-deoxy-manno-octulosonate cytidylyltransferase, mitochondrial (290 aa).

Residues 1–50 constitute a mitochondrion transit peptide; it reads MSVCSSSSSSQKTWIVNGILAGTAIAAAIGARAYLGRSKKFRSRVVGIIP.

It belongs to the KdsB family. Mg(2+) is required as a cofactor. In terms of tissue distribution, expressed in roots, leaves, stems and siliques.

It is found in the mitochondrion outer membrane. The enzyme catalyses 3-deoxy-alpha-D-manno-oct-2-ulosonate + CTP = CMP-3-deoxy-beta-D-manno-octulosonate + diphosphate. Its pathway is nucleotide-sugar biosynthesis; CMP-3-deoxy-D-manno-octulosonate biosynthesis; CMP-3-deoxy-D-manno-octulosonate from 3-deoxy-D-manno-octulosonate and CTP: step 1/1. With respect to regulation, inhibited by 2beta-deoxy-Kdo. In terms of biological role, catalyzes the production of the sugar nucleotide CMP-3-deoxy-D-manno-octulosonate (CMP-KDO). CTP is the preferred nucleotide donor, but it can partially be replaced with UTP. Activates KDO during the biosynthesis of rhamnogalacturonan II (RG-II), a structurally complex pectic polysaccharide of the primary cell wall. RG-II is essential for the cell wall integrity of rapidly growing tissues and pollen tube growth and elongation. The chain is 3-deoxy-manno-octulosonate cytidylyltransferase, mitochondrial from Arabidopsis thaliana (Mouse-ear cress).